An 838-amino-acid polypeptide reads, in one-letter code: U1 SNP1-associating protein 1 (838 aa).

At 1–536 the chain is on the cytoplasmic side; that stretch reads MSEYLAQTPC…VRPLRNSFPL (536 aa). Positions 31 to 240 are required for ERAD-L function; the sequence is HPLSTVGRLL…DFAPAHNSFF (210 aa). The region spanning 259–318 is the Ubiquitin-like domain; that stretch reads ERFVLEFISDATLSITQMNVKPDTTVKQVKDFICSVYTHSLNLRRNDIKLIYKGQLLHEN. The important for HRD1 oligomer formation stretch occupies residues 319 to 418; that stretch reads NFAGNSSKIS…VPTDELYRKC (100 aa). Residues 345–535 form an interaction with HRD1 region; the sequence is QEYTESGPGF…VVRPLRNSFP (191 aa). Phosphoserine is present on residues Ser374, Ser376, and Ser379. Positions 437–490 are required for ERAD-L function and HRD1 oligomer formation; it reads SSYLSVIKGDYGEIKIPISSNDYRINGDNILLSPSAIEQLESALNFKIERPRDS. The helical transmembrane segment at 537 to 559 threads the bilayer; the sequence is LLVLIRTFYLIGYNSLVPFFIIL. Topologically, residues 560–563 are extracellular; sequence EFGS. A helical membrane pass occupies residues 564–583; sequence FLPWKYIILLSLLFIFRTVW. Residues 584 to 838 lie on the Cytoplasmic side of the membrane; the sequence is NTQEVWNLWR…QPHLYIPDED (255 aa). The tract at residues 584-838 is interaction with DER1; it reads NTQEVWNLWR…QPHLYIPDED (255 aa). Positions 795-838 are disordered; that stretch reads ARDREQPAPSAQQQENEDEALIIPDEEEPTATGAQPHLYIPDED. Positions 809 to 823 are enriched in acidic residues; the sequence is ENEDEALIIPDEEEP.

In terms of assembly, component of the HRD1 ubiquitin ligase complex which contains the E3 ligase HRD1, its cofactors HRD3, USA1 and DER1, substrate recruiting factor YOS9 and CDC48-binding protein UBX2. Within the complex, interacts directly with HRD1 (via N-terminus) and DER1 (via C-terminus) and indirectly with HRD3. In ERAD-L, HRD3 and YOS9 jointly bind misfolded glycoproteins in the endoplasmic reticulum (ER) lumen. Movement of ERAD-L substrates through the ER membrane is facilitated by HRD1 and DER1 which have lateral gates facing each other and which distort the membrane region between the lateral gates, making it much thinner than a normal phospholipid bilayer. Substrates insert into the membrane as a hairpin loop with one strand interacting with DER1 and the other with HRD1. The HRD1 complex interacts with the heterotrimeric CDC48-NPL4-UFD1 ATPase complex which is recruited by UBX2 via its interaction with CDC48 and which moves ubiquitinated substrates to the cytosol for targeting to the proteasome.

It localises to the endoplasmic reticulum membrane. Scaffold protein of the endoplasmic reticulum-associated degradation (ERAD) (also known as endoplasmic reticulum quality control, ERQC) pathway involved in ubiquitin-dependent degradation of misfolded endoplasmic reticulum proteins. Component of the HRD1 ubiquitin ligase complex, which is part of the ERAD-L and ERAD-M pathways responsible for the rapid degradation of soluble lumenal and membrane proteins with misfolded lumenal domains (ERAD-L), or ER-membrane proteins with misfolded transmembrane domains (ERAD-M). Has multiple functions in ERAD including recruitment of DER1 to the HRD1 ubiquitin ligase, and regulation of HRD1 activity. Involved in oligomerization of HRD1 and in HRD1 autoubiquitination and degradation. The protein is U1 SNP1-associating protein 1 (USA1) of Saccharomyces cerevisiae (strain ATCC 204508 / S288c) (Baker's yeast).